We begin with the raw amino-acid sequence, 105 residues long: Small ribosomal subunit protein uS10c (105 aa).

Belongs to the universal ribosomal protein uS10 family. In terms of assembly, part of the 30S ribosomal subunit.

The protein localises to the plastid. It is found in the chloroplast. Its function is as follows. Involved in the binding of tRNA to the ribosomes. The chain is Small ribosomal subunit protein uS10c from Pyropia yezoensis (Susabi-nori).